The following is a 252-amino-acid chain: NADH-quinone oxidoreductase subunit E (252 aa).

Cysteine 114, cysteine 119, cysteine 155, and cysteine 159 together coordinate [2Fe-2S] cluster. The tract at residues 211 to 252 (LAGLPDQRPDEGQGGPGAPTLAGLQVARKNDMQAPPTPGADE) is disordered.

This sequence belongs to the complex I 24 kDa subunit family. It depends on [2Fe-2S] cluster as a cofactor.

It carries out the reaction a quinone + NADH + 5 H(+)(in) = a quinol + NAD(+) + 4 H(+)(out). Its function is as follows. NDH-1 shuttles electrons from NADH, via FMN and iron-sulfur (Fe-S) centers, to quinones in the respiratory chain. The immediate electron acceptor for the enzyme in this species is believed to be menaquinone. Couples the redox reaction to proton translocation (for every two electrons transferred, four hydrogen ions are translocated across the cytoplasmic membrane), and thus conserves the redox energy in a proton gradient. The chain is NADH-quinone oxidoreductase subunit E (nuoE) from Mycobacterium bovis (strain ATCC BAA-935 / AF2122/97).